We begin with the raw amino-acid sequence, 917 residues long: ABC transporter A family member 12 (917 aa).

A run of 6 helical transmembrane segments spans residues 34 to 54 (LILV…VLDA), 323 to 343 (IASL…FPVI), 377 to 397 (FLTI…AIGL), 409 to 429 (FVFY…VSSI), 435 to 455 (TVTV…SFLF), and 508 to 528 (GEVF…AYYI). Positions 595-832 (ILCDNLKKVY…YGGSYVFTMT (238 aa)) constitute an ABC transporter domain. 633–640 (GPNGAGKT) is an ATP binding site.

The protein belongs to the ABC transporter superfamily. ABCA family. CPR flippase (TC 3.A.1.211) subfamily.

It is found in the membrane. The protein is ABC transporter A family member 12 (ABCA12) of Arabidopsis thaliana (Mouse-ear cress).